A 323-amino-acid polypeptide reads, in one-letter code: Thymidylate synthase (323 aa).

DUMP contacts are provided by residues Arg-21 and 172-173; that span reads RR. The Nucleophile role is filled by Cys-192. DUMP-binding positions include 214–217, Asn-225, and 255–257; these read RSND and HVY. Asp-217 is a binding site for (6R)-5,10-methylene-5,6,7,8-tetrahydrofolate. A (6R)-5,10-methylene-5,6,7,8-tetrahydrofolate-binding site is contributed by Ala-322.

This sequence belongs to the thymidylate synthase family. Bacterial-type ThyA subfamily. In terms of assembly, homodimer.

It localises to the cytoplasm. The enzyme catalyses dUMP + (6R)-5,10-methylene-5,6,7,8-tetrahydrofolate = 7,8-dihydrofolate + dTMP. It participates in pyrimidine metabolism; dTTP biosynthesis. Functionally, catalyzes the reductive methylation of 2'-deoxyuridine-5'-monophosphate (dUMP) to 2'-deoxythymidine-5'-monophosphate (dTMP) while utilizing 5,10-methylenetetrahydrofolate (mTHF) as the methyl donor and reductant in the reaction, yielding dihydrofolate (DHF) as a by-product. This enzymatic reaction provides an intracellular de novo source of dTMP, an essential precursor for DNA biosynthesis. The polypeptide is Thymidylate synthase (Pseudomonas syringae pv. tomato (strain ATCC BAA-871 / DC3000)).